We begin with the raw amino-acid sequence, 192 residues long: Casparian strip membrane protein 1 (192 aa).

At 1-26 the chain is on the cytoplasmic side; it reads MTKSVRLEEGDASKVLVPVGSNKGVS. A helical transmembrane segment spans residues 27–47; it reads VMDLVLRLVGIAGTLGAAIAM. Over 48-75 the chain is Extracellular; it reads GTNEQTLPFFTRFVVFNAEYDDFRSFRL. A helical transmembrane segment spans residues 76-96; the sequence is FVIVNAIVCAYFVLTLPLSIV. Topologically, residues 97–107 are cytoplasmic; that stretch reads HIMRSAARGSR. A helical transmembrane segment spans residues 108–128; that stretch reads ILLIIMDTVMLALLTAGASAA. Topologically, residues 129–161 are extracellular; it reads ASIVYLAHNGNTSTNWLPVCQQYGDFCQGASGS. Residue Asn139 is glycosylated (N-linked (GlcNAc...) asparagine). The helical transmembrane segment at 162-182 threads the bilayer; it reads LIGSFGAVVVFILIILLGAIA. Residues 183-192 are Cytoplasmic-facing; that stretch reads LSRHAKRVVL.

Belongs to the Casparian strip membrane proteins (CASP) family. As to quaternary structure, homodimer and heterodimers.

It localises to the cell membrane. Functionally, regulates membrane-cell wall junctions and localized cell wall deposition. Required for establishment of the Casparian strip membrane domain (CSD) and the subsequent formation of Casparian strips, a cell wall modification of the root endodermis that determines an apoplastic barrier between the intraorganismal apoplasm and the extraorganismal apoplasm and prevents lateral diffusion. The sequence is that of Casparian strip membrane protein 1 from Lactuca saligna (Willowleaf lettuce).